The chain runs to 246 residues: 3'(2'),5'-bisphosphate nucleotidase CysQ (246 aa).

Residues Glu-64, Asp-83, Leu-85, Asp-86, and Asp-205 each contribute to the Mg(2+) site. Substrate is bound at residue Glu-64. Substrate-binding positions include 85–88 and Asp-205; that span reads LDGT.

This sequence belongs to the inositol monophosphatase superfamily. CysQ family. Mg(2+) is required as a cofactor.

The protein resides in the cell inner membrane. The enzyme catalyses adenosine 3',5'-bisphosphate + H2O = AMP + phosphate. Functionally, converts adenosine-3',5'-bisphosphate (PAP) to AMP. This is 3'(2'),5'-bisphosphate nucleotidase CysQ from Escherichia coli O6:H1 (strain CFT073 / ATCC 700928 / UPEC).